The following is a 367-amino-acid chain: Chorismate synthase (367 aa).

NADP(+)-binding residues include R48 and R54. Residues 125–127, 238–239, G278, 293–297, and R319 contribute to the FMN site; these read RSS, NA, and KPTSS.

It belongs to the chorismate synthase family. As to quaternary structure, homotetramer. It depends on FMNH2 as a cofactor.

It carries out the reaction 5-O-(1-carboxyvinyl)-3-phosphoshikimate = chorismate + phosphate. The protein operates within metabolic intermediate biosynthesis; chorismate biosynthesis; chorismate from D-erythrose 4-phosphate and phosphoenolpyruvate: step 7/7. Catalyzes the anti-1,4-elimination of the C-3 phosphate and the C-6 proR hydrogen from 5-enolpyruvylshikimate-3-phosphate (EPSP) to yield chorismate, which is the branch point compound that serves as the starting substrate for the three terminal pathways of aromatic amino acid biosynthesis. This reaction introduces a second double bond into the aromatic ring system. The chain is Chorismate synthase from Xanthomonas campestris pv. campestris (strain B100).